The following is an 858-amino-acid chain: Taste receptor type 1 member 3 (858 aa).

The signal sequence occupies residues 1–20; the sequence is MPGLAILGLSLAAFLELGMG. Residues 21-575 are Extracellular-facing; it reads SSLCLSQQFK…FLAWGEPAVL (555 aa). N-linked (GlcNAc...) asparagine glycans are attached at residues Asn85, Asn130, Asn203, Asn264, Asn379, Asn387, Asn418, Asn439, and Asn482. The chain crosses the membrane as a helical span at residues 576-596; that stretch reads SLLLLLCLVLGLTLAALGLFV. Topologically, residues 597-610 are cytoplasmic; that stretch reads HYWDSPLVQASGGS. Residues 611–631 form a helical membrane-spanning segment; the sequence is LFCFGLICLGLFCLSVLLFPG. The Extracellular portion of the chain corresponds to 632-644; sequence RPRSASCLAQQPM. Residues 645-665 form a helical membrane-spanning segment; that stretch reads AHLPLTGCLSTLFLQAAEIFV. Topologically, residues 666 to 687 are cytoplasmic; sequence ESELPLSWANWLCSYLRGPWAW. A helical membrane pass occupies residues 688–708; it reads LVVLLATLVEAALCAWYLMAF. At 709–735 the chain is on the extracellular side; sequence PPEVVTDWQVLPTEVLEHCRMRSWVSL. A helical transmembrane segment spans residues 736-756; sequence GLVHITNAVLAFLCFLGTFLV. The Cytoplasmic segment spans residues 757-767; that stretch reads QSQPGRYNRAR. Residues 768-788 form a helical membrane-spanning segment; the sequence is GLTFAMLAYFIIWVSFVPLLA. Over 789–796 the chain is Extracellular; the sequence is NVQVAYQP. The chain crosses the membrane as a helical span at residues 797–817; sequence AVQMGAILFCALGILATFHLP. Over 818 to 858 the chain is Cytoplasmic; that stretch reads KCYVLLWLPELNTQEFFLGRSPKEASDGNSGSSEATRGHSE. A disordered region spans residues 839–858; it reads PKEASDGNSGSSEATRGHSE.

Belongs to the G-protein coupled receptor 3 family. TAS1R subfamily. Forms homodimers or heterodimers with TAS1R1 and TAS1R2.

Its subcellular location is the cell membrane. Its function is as follows. Putative taste receptor. TAS1R1/TAS1R3 responds to the umami taste stimulus (the taste of monosodium glutamate) and also to most of the 20 standard L-amino acids, but not to their D-enantiomers or other compounds. TAS1R2/TAS1R3 recognizes diverse natural and synthetic sweeteners. TAS1R3 is essential for the recognition and response to the disaccharide trehalose. Sequence differences within and between species can significantly influence the selectivity and specificity of taste responses. In Rattus norvegicus (Rat), this protein is Taste receptor type 1 member 3 (Tas1r3).